We begin with the raw amino-acid sequence, 359 residues long: Small ribosomal subunit protein mS22 (359 aa).

Residues 40–65 (RPQPFEVGQPRRLLSSEAESGSSEVK) form a disordered region. Phosphoserine is present on serine 54. Residue lysine 210 is modified to N6-acetyllysine.

Belongs to the mitochondrion-specific ribosomal protein mS22 family. Component of the mitochondrial ribosome small subunit (28S) which comprises a 12S rRNA and about 30 distinct proteins.

The protein localises to the mitochondrion. This chain is Small ribosomal subunit protein mS22 (Mrps22), found in Mus musculus (Mouse).